Here is a 432-residue protein sequence, read N- to C-terminus: Glutamyl-tRNA reductase (432 aa).

Residues 55–58 (TCNR), Ser114, 119–121 (ETQ), and Gln125 each bind substrate. The active-site Nucleophile is the Cys56. An NADP(+)-binding site is contributed by 194-199 (GAGEMI).

Belongs to the glutamyl-tRNA reductase family. As to quaternary structure, homodimer.

It catalyses the reaction (S)-4-amino-5-oxopentanoate + tRNA(Glu) + NADP(+) = L-glutamyl-tRNA(Glu) + NADPH + H(+). The protein operates within porphyrin-containing compound metabolism; protoporphyrin-IX biosynthesis; 5-aminolevulinate from L-glutamyl-tRNA(Glu): step 1/2. Its function is as follows. Catalyzes the NADPH-dependent reduction of glutamyl-tRNA(Glu) to glutamate 1-semialdehyde (GSA). This Burkholderia cenocepacia (strain ATCC BAA-245 / DSM 16553 / LMG 16656 / NCTC 13227 / J2315 / CF5610) (Burkholderia cepacia (strain J2315)) protein is Glutamyl-tRNA reductase.